Reading from the N-terminus, the 212-residue chain is Phosphoribosylglycinamide formyltransferase (212 aa).

A N(1)-(5-phospho-beta-D-ribosyl)glycinamide-binding site is contributed by 12 to 14; that stretch reads GTN. (6R)-10-formyltetrahydrofolate is bound by residues 90-93 and N107; that span reads MKIL. H109 acts as the Proton donor in catalysis.

This sequence belongs to the GART family.

The catalysed reaction is N(1)-(5-phospho-beta-D-ribosyl)glycinamide + (6R)-10-formyltetrahydrofolate = N(2)-formyl-N(1)-(5-phospho-beta-D-ribosyl)glycinamide + (6S)-5,6,7,8-tetrahydrofolate + H(+). It participates in purine metabolism; IMP biosynthesis via de novo pathway; N(2)-formyl-N(1)-(5-phospho-D-ribosyl)glycinamide from N(1)-(5-phospho-D-ribosyl)glycinamide (10-formyl THF route): step 1/1. Functionally, catalyzes the transfer of a formyl group from 10-formyltetrahydrofolate to 5-phospho-ribosyl-glycinamide (GAR), producing 5-phospho-ribosyl-N-formylglycinamide (FGAR) and tetrahydrofolate. The protein is Phosphoribosylglycinamide formyltransferase of Haemophilus influenzae (strain ATCC 51907 / DSM 11121 / KW20 / Rd).